The sequence spans 152 residues: Large ribosomal subunit protein bL9 (152 aa).

It belongs to the bacterial ribosomal protein bL9 family.

Its function is as follows. Binds to the 23S rRNA. This chain is Large ribosomal subunit protein bL9, found in Saccharophagus degradans (strain 2-40 / ATCC 43961 / DSM 17024).